The primary structure comprises 131 residues: UPF0102 protein RALTA_A3032 (131 aa).

The span at 1 to 12 (MMRSFKSTQEPS) shows a compositional bias: polar residues. Positions 1–21 (MMRSFKSTQEPSRQARGAQAE) are disordered.

This sequence belongs to the UPF0102 family.

The polypeptide is UPF0102 protein RALTA_A3032 (Cupriavidus taiwanensis (strain DSM 17343 / BCRC 17206 / CCUG 44338 / CIP 107171 / LMG 19424 / R1) (Ralstonia taiwanensis (strain LMG 19424))).